Consider the following 443-residue polypeptide: Chromosome partition protein MukF (443 aa).

A leucine-zipper region spans residues 209–237 (LDETSGNLRELQDVLNASGDKLQSQLLRI).

This sequence belongs to the MukF family. Interacts, and probably forms a ternary complex, with MukE and MukB via its C-terminal region. The complex formation is stimulated by calcium or magnesium. It is required for an interaction between MukE and MukB.

The protein resides in the cytoplasm. Its subcellular location is the nucleoid. Its function is as follows. Involved in chromosome condensation, segregation and cell cycle progression. May participate in facilitating chromosome segregation by condensation DNA from both sides of a centrally located replisome during cell division. Not required for mini-F plasmid partitioning. Probably acts via its interaction with MukB and MukE. Overexpression results in anucleate cells. It has a calcium binding activity. In Glaesserella parasuis serovar 5 (strain SH0165) (Haemophilus parasuis), this protein is Chromosome partition protein MukF.